We begin with the raw amino-acid sequence, 89 residues long: Sugar transporter SemiSWEET (89 aa).

Transmembrane regions (helical) follow at residues 4–27 (ILLTGLFAAFFTTFAFAPQSIKTI), 35–55 (ISVVMYIMFLTGVISWIAYGI), and 60–82 (FAVLIANIVTLFLAAPVLVITLI). The PQ-loop domain occupies 7 to 59 (TGLFAAFFTTFAFAPQSIKTIRTRNTEGISVVMYIMFLTGVISWIAYGIMRSD).

In terms of assembly, homodimer.

The protein localises to the cell membrane. The homodimer mediates transmembrane sugar transport down a concentration gradient. Transport is probably effected by rocking-type movements, where a cargo-binding cavity opens first on one and then on the other side of the membrane. The protein is Sugar transporter SemiSWEET of Escherichia coli (strain UMEA 3162-1).